Here is a 190-residue protein sequence, read N- to C-terminus: Prostaglandin-H2 D-isomerase (190 aa).

Residues 1–22 form the signal peptide; it reads MATHHTLWMGLVLLGLLGGLQA. A glycan (N-linked (GlcNAc...) asparagine) is linked at Asn-51. Cys-65 functions as the Nucleophile in the catalytic mechanism. N-linked (GlcNAc...) asparagine glycosylation is present at Asn-78. Cysteines 89 and 186 form a disulfide.

This sequence belongs to the calycin superfamily. Lipocalin family. In terms of assembly, monomer.

Its subcellular location is the rough endoplasmic reticulum. The protein resides in the nucleus membrane. It localises to the golgi apparatus. It is found in the cytoplasm. The protein localises to the perinuclear region. Its subcellular location is the secreted. The catalysed reaction is prostaglandin H2 = prostaglandin D2. Catalyzes the conversion of PGH2 to PGD2, a prostaglandin involved in smooth muscle contraction/relaxation and a potent inhibitor of platelet aggregation. Involved in a variety of CNS functions, such as sedation, NREM sleep and PGE2-induced allodynia, and may have an anti-apoptotic role in oligodendrocytes. Binds small non-substrate lipophilic molecules, including biliverdin, bilirubin, retinal, retinoic acid and thyroid hormone, and may act as a scavenger for harmful hydrophobic molecules and as a secretory retinoid and thyroid hormone transporter. Possibly involved in development and maintenance of the blood-brain, blood-retina, blood-aqueous humor and blood-testis barrier. It is likely to play important roles in both maturation and maintenance of the central nervous system and male reproductive system. Involved in PLA2G3-dependent maturation of mast cells. PLA2G3 is secreted by immature mast cells and acts on nearby fibroblasts upstream to PTDGS to synthesize PGD2, which in turn promotes mast cell maturation and degranulation via PTGDR. In Macaca fuscata fuscata (Japanese macaque), this protein is Prostaglandin-H2 D-isomerase (PTGDS).